The following is a 242-amino-acid chain: Probable transcriptional regulatory protein BTH_I1015 (242 aa).

The protein belongs to the TACO1 family.

The protein localises to the cytoplasm. The polypeptide is Probable transcriptional regulatory protein BTH_I1015 (Burkholderia thailandensis (strain ATCC 700388 / DSM 13276 / CCUG 48851 / CIP 106301 / E264)).